The primary structure comprises 176 residues: 3-hydroxyanthranilate 3,4-dioxygenase (176 aa).

R44 provides a ligand contact to O2. 3 residues coordinate Fe cation: H48, E54, and H92. E54 is a substrate binding site. Residues R96 and E106 each coordinate substrate. Fe cation is bound by residues C121, C124, C158, and C161.

This sequence belongs to the 3-HAO family. In terms of assembly, homodimer. Fe(2+) is required as a cofactor.

The catalysed reaction is 3-hydroxyanthranilate + O2 = (2Z,4Z)-2-amino-3-carboxymuconate 6-semialdehyde. It participates in cofactor biosynthesis; NAD(+) biosynthesis; quinolinate from L-kynurenine: step 3/3. In terms of biological role, catalyzes the oxidative ring opening of 3-hydroxyanthranilate to 2-amino-3-carboxymuconate semialdehyde, which spontaneously cyclizes to quinolinate. This is 3-hydroxyanthranilate 3,4-dioxygenase from Xanthomonas campestris pv. campestris (strain B100).